The following is a 499-amino-acid chain: Putative sodium-dependent excitatory amino acid transporter glt-4 (499 aa).

The Cytoplasmic portion of the chain corresponds to 1-7 (MAKLSKE). Transmembrane regions (helical) follow at residues 8-28 (NLLL…GFSL), 50-70 (FVQM…ITSL), and 87-107 (IYYT…VSVI). Residue asparagine 165 is glycosylated (N-linked (GlcNAc...) asparagine). The next 3 membrane-spanning stretches (helical) occupy residues 194–217 (VSDG…IGVI), 227–254 (FFKS…TFLI), and 276–297 (ITVI…CVVL). Positions 303–333 (IKFVGGMAQALLTALATSSSSATLPLSIKCC) form an intramembrane region, discontinuously helical. An L-aspartate-binding site is contributed by 320 to 322 (SSS). A helical membrane pass occupies residues 343–369 (VTRFVLPLGATINMDGTALYEAVAAIY). Na(+)-binding residues include glycine 351, threonine 353, and asparagine 355. L-aspartate contacts are provided by residues threonine 359, 400 to 404 (IPQAG), aspartate 433, and asparagine 440. An intramembrane region (discontinuously helical) is located at residues 383 to 416 (VVLVSLTATLASIGAAGIPQAGIVTMIMVLIAIG). Residues 430-451 (FMLDRLRTTVNVHGDSIATAVI) form a helical membrane-spanning segment. Na(+) contacts are provided by asparagine 440 and aspartate 444.

The protein belongs to the dicarboxylate/amino acid:cation symporter (DAACS) (TC 2.A.23) family.

Its subcellular location is the cell membrane. Functionally, sodium-dependent, high-affinity amino acid transporter that mediates the uptake of L-glutamate and also L-aspartate and D-aspartate. Functions as a symporter that transports one amino acid molecule together with two or three Na(+) ions and one proton, in parallel with the counter-transport of one K(+) ion. Mediates Cl(-) flux that is not coupled to amino acid transport; this avoids the accumulation of negative charges due to aspartate and Na(+) symport. The protein is Putative sodium-dependent excitatory amino acid transporter glt-4 (glt-4) of Caenorhabditis elegans.